The sequence spans 490 residues: Cytochrome P450 2C20 (490 aa).

Residue C435 coordinates heme.

It belongs to the cytochrome P450 family. It depends on heme as a cofactor.

It localises to the endoplasmic reticulum membrane. The protein resides in the microsome membrane. The catalysed reaction is an organic molecule + reduced [NADPH--hemoprotein reductase] + O2 = an alcohol + oxidized [NADPH--hemoprotein reductase] + H2O + H(+). In terms of biological role, cytochromes P450 are a group of heme-thiolate monooxygenases. In liver microsomes, this enzyme is involved in an NADPH-dependent electron transport pathway. It oxidizes a variety of structurally unrelated compounds, including steroids, fatty acids, and xenobiotics. The protein is Cytochrome P450 2C20 (CYP2C20) of Macaca fascicularis (Crab-eating macaque).